A 272-amino-acid polypeptide reads, in one-letter code: Phosphatidylglycerol--prolipoprotein diacylglyceryl transferase (272 aa).

4 helical membrane passes run 21 to 41 (IAVH…IFVA), 60 to 80 (YIWW…VLFY), 101 to 121 (GVYA…FIIA), and 131 to 151 (VSFW…YIFG). R152 is a binding site for a 1,2-diacyl-sn-glycero-3-phospho-(1'-sn-glycerol). The next 3 helical transmembrane spans lie at 181 to 201 (PSQI…LAFY), 209 to 229 (GQLA…AEFF), and 244 to 264 (LTMG…FYVV).

The protein belongs to the Lgt family.

It localises to the cell inner membrane. It carries out the reaction L-cysteinyl-[prolipoprotein] + a 1,2-diacyl-sn-glycero-3-phospho-(1'-sn-glycerol) = an S-1,2-diacyl-sn-glyceryl-L-cysteinyl-[prolipoprotein] + sn-glycerol 1-phosphate + H(+). It functions in the pathway protein modification; lipoprotein biosynthesis (diacylglyceryl transfer). Functionally, catalyzes the transfer of the diacylglyceryl group from phosphatidylglycerol to the sulfhydryl group of the N-terminal cysteine of a prolipoprotein, the first step in the formation of mature lipoproteins. The polypeptide is Phosphatidylglycerol--prolipoprotein diacylglyceryl transferase (Aliarcobacter butzleri (strain RM4018) (Arcobacter butzleri)).